The primary structure comprises 132 residues: Large ribosomal subunit protein eL28 (132 aa).

Belongs to the eukaryotic ribosomal protein eL28 family.

This Dictyostelium discoideum (Social amoeba) protein is Large ribosomal subunit protein eL28 (rpl28).